Here is a 210-residue protein sequence, read N- to C-terminus: MASSAEAIVTHAERSISEDAIVAAARERADDIGAGAVTPAVGALLSVLARLTGGRAVVEVGTGAGVSGLWLLSGMRDDGVLTTIDVEPEHQRIAKQGFSEAGVGPGRTRLISGRAQEVLTRLADESYDLVFIDADPVDQPQFVVEGVRLLRSGGAIVVHRAALGGRAGDADARDAEVTAVREAARLIAEDERLTPVLIPLGDGLLAAVRD.

S-adenosyl-L-methionine is bound by residues valine 37, glutamate 59, 61 to 62 (GT), serine 67, aspartate 85, and valine 86. Aspartate 133 contributes to the substrate binding site. Aspartate 135 serves as a coordination point for S-adenosyl-L-methionine.

This sequence belongs to the class I-like SAM-binding methyltransferase superfamily. Cation-dependent O-methyltransferase family.

This Mycolicibacterium smegmatis (strain ATCC 700084 / mc(2)155) (Mycobacterium smegmatis) protein is Putative O-methyltransferase MSMEG_5073/MSMEI_4947.